The chain runs to 326 residues: Polyprenal reductase (326 aa).

5 helical membrane-spanning segments follow: residues 26–46 (MMFGTFIATIVFFGGLMTFVE), 84–104 (HFYTFALFWSWLAFYVLVSTV), 167–187 (INLSHYAVGYVHYFGAVIALL), 212–232 (ILYLGVFFLAWQQQYASNMIL), and 256–276 (LFNLLSSPHMFLEVVMYFCIA).

This sequence belongs to the steroid 5-alpha reductase family. Polyprenal reductase subfamily.

It localises to the endoplasmic reticulum membrane. The enzyme catalyses a di-trans,poly-cis-dolichal + NADP(+) = a di-trans,poly-cis-polyprenal + NADPH + H(+). Its pathway is protein modification; protein glycosylation. In terms of biological role, plays a key role in early steps of protein N-linked glycosylation by being involved in the conversion of polyprenol into dolichol. Acts as a polyprenal reductase that mediates the reduction of polyprenal into dolichal in a NADP-dependent mechanism. Dolichols are required for the synthesis of dolichol-linked monosaccharides and the oligosaccharide precursor used for N-glycosylation. The protein is Polyprenal reductase of Drosophila melanogaster (Fruit fly).